We begin with the raw amino-acid sequence, 128 residues long: Fluoride-specific ion channel FluC (128 aa).

A run of 4 helical transmembrane segments spans residues 5 to 25, 34 to 54, 67 to 87, and 99 to 119; these read LFISCGAILGASLRWAIGLLF, FGALIANLLGCLIIGVLLGLF, FLITGFLGSLTTFSSFSSEVV, and FCVLMMHLFGCLAMTVLGIWI. Na(+) contacts are provided by Gly74 and Thr77.

Belongs to the fluoride channel Fluc/FEX (TC 1.A.43) family.

The protein localises to the cell inner membrane. It catalyses the reaction fluoride(in) = fluoride(out). Its activity is regulated as follows. Na(+) is not transported, but it plays an essential structural role and its presence is essential for fluoride channel function. In terms of biological role, fluoride-specific ion channel. Important for reducing fluoride concentration in the cell, thus reducing its toxicity. This Haemophilus influenzae (strain PittEE) protein is Fluoride-specific ion channel FluC.